Here is a 1829-residue protein sequence, read N- to C-terminus: Unconventional myosin-Va (1829 aa).

A Myosin N-terminal SH3-like domain is found at 8–60 (TKYARVWIPDPEEVWKSAELLKDYKPGDKVLQLRLEEGKDLEYCLDPKTKELP). One can recognise a Myosin motor domain in the interval 69-764 (VGENDLTALS…QVAYLEKIRA (696 aa)). 163–170 (GESGAGKT) serves as a coordination point for ATP. The interval 599 to 635 (AISPTSATPSGRVPLSRTPVKPAKARPGQTSKEHKKT) is disordered. Positions 644–666 (LHLLMETLNATTPHYVRCIKPND) are actin-binding. IQ domains are found at residues 767-789 (LRAACIRIQKTIRGWLMRKKYMR), 790-814 (MRRAAITIQRYVRGHQARCYATFLR), 815-837 (RTRAAIIIQKFQRMYVVRKRYQC), 838-862 (MRDATIALQALLRGYLVRNKYQMML), 863-887 (REHKSIIIQKHVRGWLARVHYHRTL), and 888-915 (KAIVYLQCCYRRMMAKRELKKLKIEARS). 2 coiled-coil regions span residues 916 to 1239 (VERY…PEVT) and 1315 to 1419 (GLKE…ELEV). 2 disordered regions span residues 1106 to 1148 (IPKP…SEKK) and 1170 to 1199 (KQSLQDELDRKEEQALRAKAKEEERPPIRG). The span at 1117 to 1131 (THSSNESEYTFSSEI) shows a compositional bias: polar residues. Composition is skewed to basic and acidic residues over residues 1137–1148 (LPLRMEEPSEKK) and 1170–1196 (KQSLQDELDRKEEQALRAKAKEEERPP). Residues 1508–1784 (TSTINGIKKV…IRTIQLRLRD (277 aa)) enclose the Dilute domain. The residue at position 1734 (Thr-1734) is a Phosphothreonine.

It belongs to the TRAFAC class myosin-kinesin ATPase superfamily. Myosin family. As to quaternary structure, may be a homodimer, which associates with multiple calmodulin or myosin light chains. Neuronal and non-neuronal cells of the brain.

It localises to the golgi apparatus membrane. The catalysed reaction is ATP + H2O = ADP + phosphate + H(+). Functionally, processive actin-based motor that can move in large steps approximating the 36-nm pseudo-repeat of the actin filament. Can hydrolyze ATP in the presence of actin, which is essential for its function as a motor protein. Involved in melanosome transport. Also mediates the transport of vesicles to the plasma membrane. May also be required for some polarization process involved in dendrite formation. The protein is Unconventional myosin-Va (MYO5A) of Gallus gallus (Chicken).